A 696-amino-acid polypeptide reads, in one-letter code: Solute carrier family 53 member 1 (696 aa).

Residues 1–228 (MKFAEHLSAH…RVPPLGAAQP (228 aa)) lie on the Cytoplasmic side of the membrane. The SPX domain occupies 2-224 (KFAEHLSAHI…MKRLRVPPLG (223 aa)). Positions 158-165 (KILKKHDK) are important for inositol polyphosphate binding. Residues 229 to 259 (APAWTTFRVGLFCGIFIVLNITLVLAAVFKL) form a helical membrane-spanning segment. Over 260-264 (ETDRS) the chain is Extracellular. A helical membrane pass occupies residues 265–296 (IWPLIRIYRGGFLLIEFLFLLGINTYGWRQAG). At 297-309 (VNHVLIFELNPRS) the chain is on the cytoplasmic side. A helical transmembrane segment spans residues 310–337 (NLSHQHLFEIAGFLGILWCLSLLACFFA). The Extracellular portion of the chain corresponds to 338-343 (PISVIP). The helical transmembrane segment at 344 to 365 (TYVYPLALYGFMVFFLINPTKT) threads the bilayer. The segment at residues 366-383 (FYYKSRFWLLKLLFRVFT) is an intramembrane region (helical). At 384–388 (APFHK) the chain is on the cytoplasmic side. The chain crosses the membrane as a discontinuously helical span at residues 389-422 (VGFADFWLADQLNSLSVILMDLEYMICFYSLELK). The phosphate site is built by D398 and N401. At 423-429 (WDESKGL) the chain is on the extracellular side. Residues 430–471 (LPNNSEESGICHKYTYGVRAIVQCIPAWLRFIQCLRRYRDTK) form a discontinuously helical membrane-spanning segment. Residues 439 to 643 (ICHKYTYGVR…LNADDQTLLE (205 aa)) form the EXS domain. Residue R472 is a topological domain, cytoplasmic. Residues 473–503 (AFPHLVNAGKYSTTFFMVTFAALYSTHKERG) traverse the membrane as a helical segment. 2 residues coordinate phosphate: K482 and Y483. Residues 504–506 (HSD) are Extracellular-facing. The helical transmembrane segment at 507–534 (TMVFFYLWIVFYIISSCYTLIWDLKMDW) threads the bilayer. Topologically, residues 535 to 553 (GLFDKNAGENTFLREEIVY) are cytoplasmic. The discontinuously helical transmembrane segment at 554-585 (PQKAYYYCAIIEDVILRFAWTIQISITSTTLL) threads the bilayer. R570 serves as a coordination point for phosphate. The Extracellular portion of the chain corresponds to 586 to 587 (PH). The chain crosses the membrane as a helical span at residues 588–626 (SGDIIATVFAPLEVFRRFVWNFFRLENEHLNNCGEFRAV). The phosphate site is built by R603 and R604. Over 627-696 (RDISVAPLNA…IEDTDDEANT (70 aa)) the chain is Cytoplasmic. At S668 the chain carries Phosphoserine. The interval 673 to 696 (RLASQSKARDTKVLIEDTDDEANT) is disordered. T690 is modified (phosphothreonine).

The protein belongs to the SYG1 (TC 2.A.94) family. As to quaternary structure, homodimer. In terms of tissue distribution, widely expressed. Detected in spleen, lymph node, thymus, leukocytes, bone marrow, heart, kidney, pancreas and skeletal muscle.

The protein localises to the cell membrane. The catalysed reaction is phosphate(in) = phosphate(out). With respect to regulation, allosterically activated by inositol hexakisphosphate (Ins6P). In terms of biological role, inorganic ion transporter that mediates phosphate ion export across plasma membrane. Plays a major role in phosphate homeostasis, preventing intracellular phosphate accumulation and possible calcium phosphate precipitation, ultimately preserving calcium signaling. Binds inositol hexakisphosphate (Ins6P) and similar inositol polyphosphates, such as 5-diphospho-inositol pentakisphosphate (5-InsP7), which are important intracellular signaling molecules involved in regulation of phosphate flux. This chain is Solute carrier family 53 member 1, found in Homo sapiens (Human).